Reading from the N-terminus, the 431-residue chain is Galactose-3-O-sulfotransferase 3 (431 aa).

Over 1 to 19 (MPPILQRLQQATKMMSRRK) the chain is Cytoplasmic. Residues 20 to 40 (ILLLVLGCSTVSLLIHQGAQL) traverse the membrane as a helical; Signal-anchor for type II membrane protein segment. The Lumenal portion of the chain corresponds to 41–431 (SWYPKLFPLS…RVLPRGPQGP (391 aa)). N-linked (GlcNAc...) asparagine glycosylation is found at asparagine 91, asparagine 110, asparagine 177, and asparagine 302. Residues 399 to 431 (QKRRGGARARPEPVLDNPPPRPIRVLPRGPQGP) form a disordered region.

It belongs to the galactose-3-O-sulfotransferase family. It depends on Mg(2+) as a cofactor. As to expression, highly expressed in thyroid, brain, kidney, heart and spinal cord.

The protein resides in the golgi apparatus. It is found in the golgi stack membrane. Its pathway is protein modification; carbohydrate sulfation. In terms of biological role, transfers a sulfate to position 3 of non-reducing beta-galactosyl residues in N-glycans and core2-branched O-glycans. Has high activity towards Gal-beta-1,4-GlcNAc, Gal-beta-1,4(Fuc-alpha-1,3)GlcNAc and lower activity towards Gal-beta-1,3(Fuc-alpha-1,4)GlcNAc. This chain is Galactose-3-O-sulfotransferase 3 (GAL3ST3), found in Homo sapiens (Human).